The primary structure comprises 59 residues: MNFTKLFLLIAMAVLLLTGQSEAGGLKKLGKKLEGAGKRVFNAAEKALPVVAGAKALGK.

The signal sequence occupies residues 1 to 23; that stretch reads MNFTKLFLLIAMAVLLLTGQSEA. The propeptide at 58–59 is removed in mature form (AeaeCec2); the sequence is GK.

In terms of tissue distribution, hemolymph (at protein level).

It localises to the secreted. Antimicrobial peptide. Antibacterial activity against Gram-negative bacteria E.coli D22 and D31, E.carotovora, K.pneumoniae, P.aeruginosa, S.typhimurium, E.cloacae B12 and X.campestris and Gram-positive bacteria A.viridans, M.luteus, B.megaterium and S.pyogenes. Possesses antifungal activity against F.oxysporum, F.culmorum and N.crassa, C.albicans, C.neoformans and S.cerevisiae. No activity against Gram-negative S.marcescens Db11, Gram-positive B.cereus, B.subtilis, B.thuringiensis, S.aureus and L.monocytogenes, the fungi A.fumigatus and B.bassiana and C.glabrata. Partially neutralizes lipopolysaccharides (LPS). Exhibits anti-inflammatory properties: inhibits LPS-induced iNOS/NOS2 transcription, nitric oxide (NO) and pro-inflammatory cytokine production in mouse macrophages and human peripheral blood mononuclear cells (PBMCs); inhibits LPS-induced activation of MAPK and NF-kappa-B signaling pathways in mouse macrophages. In Aedes aegypti (Yellowfever mosquito), this protein is Cecropin-A (CECA).